Consider the following 211-residue polypeptide: MIGRMVGLEPSSRSGVLEECRECRAIVMKGDGVQTPLHKGDSILGGEGACLMRYAAWTLISAVDVVYCSLETRESVSLTFNPDGQVIVVPFMFKGYNIAALPTTKFGDLKKDTKQIENVVSFLRSDICYAVWEFLVSSVQYKDDDRFERLFDERMRGYLRNISEGTSKVYMRGNKTFSELLEMVCGRMLECSGRVAGGGHSKIWKRCHENA.

It belongs to the UPF0329 family.

This chain is UPF0329 protein ECU07_1880/ECU10_0020, found in Encephalitozoon cuniculi (strain GB-M1) (Microsporidian parasite).